Consider the following 587-residue polypeptide: Lipoprotein LpqB (587 aa).

The signal sequence occupies residues 1–19; sequence MERLMRLTILLFLGAVLAG. A lipid anchor (N-palmitoyl cysteine) is attached at Cys-20. Residue Cys-20 is the site of S-diacylglycerol cysteine attachment.

The protein belongs to the LpqB lipoprotein family.

Its subcellular location is the cell membrane. This chain is Lipoprotein LpqB, found in Mycobacterium bovis (strain ATCC BAA-935 / AF2122/97).